The primary structure comprises 116 residues: Tyrosine-protein phosphatase 10 (116 aa).

The 116-residue stretch at 1–116 (WRMVWEQNVS…SPTGYGPIVV (116 aa)) folds into the Tyrosine-protein phosphatase domain. Residue aspartate 86 participates in substrate binding.

This sequence belongs to the protein-tyrosine phosphatase family.

The catalysed reaction is O-phospho-L-tyrosyl-[protein] + H2O = L-tyrosyl-[protein] + phosphate. The polypeptide is Tyrosine-protein phosphatase 10 (STY-10) (Styela plicata (Wrinkled sea squirt)).